The sequence spans 204 residues: Guanylate kinase (204 aa).

A Guanylate kinase-like domain is found at 4-182; it reads GLLYVISAPS…ALNQLRAIVQ (179 aa). ATP is bound at residue 11-18; it reads APSGAGKT.

The protein belongs to the guanylate kinase family.

It is found in the cytoplasm. It catalyses the reaction GMP + ATP = GDP + ADP. Functionally, essential for recycling GMP and indirectly, cGMP. The chain is Guanylate kinase from Methylococcus capsulatus (strain ATCC 33009 / NCIMB 11132 / Bath).